The primary structure comprises 47 residues: Laccase-2d (47 aa).

In terms of domain architecture, Plastocyanin-like spans 2 to 47 (TGPVADLHIINKDLSPDGFQRPTVVAGGGRDVVSIGRAGDNVTIRF).

Belongs to the multicopper oxidase family. Homodimer. It depends on Cu cation as a cofactor. In terms of processing, N-glycosylated; contains 17% carbohydrates.

Its subcellular location is the secreted. The catalysed reaction is 4 hydroquinone + O2 = 4 benzosemiquinone + 2 H2O. With respect to regulation, inhibited by sodium azide, SDS and mercaptoethanol, but not by 4-hexyl resocinol, L-cysteine and dithiothreitol. Activity is inhibited by the heavy metal ions Cr, W, Sn, Ag(+) and Hg(2+), but not by Pb(2+), Fe(3+), Ni(2+), Li(2+), Co(2+) or Cd(2+). Lignin degradation and detoxification of lignin-derived products. Has highest activity towards ABTS, also active towards ferulic acid and guaiacol, but is not active towards tyrosine, vanillic acid, 2,5-dimethyl aniline, p-anisidine or violuric acid. The sequence is that of Laccase-2d from Cerrena unicolor (Canker rot fungus).